The primary structure comprises 461 residues: Zinc finger protein ZFP2 (461 aa).

C2H2-type zinc fingers lie at residues 102 to 124, 130 to 152, 158 to 180, 186 to 208, 214 to 236, 242 to 264, 270 to 292, 298 to 320, 326 to 348, 354 to 376, 382 to 404, 410 to 432, and 438 to 460; these read YECN…QRIH, YKCN…QRIH, YKCN…QRTH, YQCK…ERIH, YECN…QRSH, YECS…QRNH, YKCN…QRLH, FECN…RRIH, YECM…QVIH, YECD…QRTH, and YQCN…QRTH.

Belongs to the krueppel C2H2-type zinc-finger protein family.

It is found in the nucleus. In terms of biological role, probable transcription factor involved in neuronal differentiation and/or phenotypic maintenance. The polypeptide is Zinc finger protein ZFP2 (ZFP2) (Homo sapiens (Human)).